The chain runs to 70 residues: Large ribosomal subunit protein bL31 (70 aa).

The Zn(2+) site is built by Cys16, Cys18, Cys37, and Cys40.

The protein belongs to the bacterial ribosomal protein bL31 family. Type A subfamily. In terms of assembly, part of the 50S ribosomal subunit. It depends on Zn(2+) as a cofactor.

Binds the 23S rRNA. The sequence is that of Large ribosomal subunit protein bL31 from Shewanella frigidimarina (strain NCIMB 400).